The chain runs to 54 residues: Large ribosomal subunit protein bL33B (54 aa).

The protein belongs to the bacterial ribosomal protein bL33 family.

The chain is Large ribosomal subunit protein bL33B from Mycolicibacterium smegmatis (strain ATCC 700084 / mc(2)155) (Mycobacterium smegmatis).